The chain runs to 146 residues: ATP synthase epsilon chain 2 (146 aa).

The protein belongs to the ATPase epsilon chain family. In terms of assembly, F-type ATPases have 2 components, CF(1) - the catalytic core - and CF(0) - the membrane proton channel. CF(1) has five subunits: alpha(3), beta(3), gamma(1), delta(1), epsilon(1). CF(0) has three main subunits: a, b and c.

The protein localises to the cell inner membrane. Produces ATP from ADP in the presence of a proton gradient across the membrane. In Cereibacter sphaeroides (strain ATCC 17023 / DSM 158 / JCM 6121 / CCUG 31486 / LMG 2827 / NBRC 12203 / NCIMB 8253 / ATH 2.4.1.) (Rhodobacter sphaeroides), this protein is ATP synthase epsilon chain 2.